We begin with the raw amino-acid sequence, 235 residues long: uncharacterized protein (235 aa).

2 disordered regions span residues 60–96 and 192–235; these read SSNR…QKKT and LNTS…YDSF. The segment covering 80–93 has biased composition (polar residues); that stretch reads SFQNMNSSMPSSTQ. Acidic residues predominate over residues 197 to 214; sequence SEDDTESIVETDYSEEEK.

This sequence belongs to the asfivirus DP238L family.

This is an uncharacterized protein from Ornithodoros (relapsing fever ticks).